A 554-amino-acid polypeptide reads, in one-letter code: Solute carrier family 22 member 1 (554 aa).

Over 1-24 (MPSVDDVLEQVGEFGWFQKQAFLN) the chain is Cytoplasmic. A helical transmembrane segment spans residues 25-45 (LCLTSVAFAPIYVGIVFLGFT). Topologically, residues 46–234 (PDHRCRSPGV…EFVGLGYRKT (189 aa)) are extracellular. N71 carries N-linked (GlcNAc...) asparagine glycosylation. A helical membrane pass occupies residues 235–255 (VAILYQTAFSVGLVLLSGLAY). Over 256–261 (AVPHWR) the chain is Cytoplasmic. The chain crosses the membrane as a helical span at residues 262 to 282 (SLQLAVSLPIFLLLLCYWFVP). Positions 282 to 286 (PESPR) match the Proline-rich sequence motif. Over 283 to 347 (ESPRWLLSQK…FRTQNLRKYT (65 aa)) the chain is Extracellular. At S333 the chain carries Phosphoserine. The helical transmembrane segment at 348 to 368 (FILMYLWFTSSVLYQGLIMHV) threads the bilayer. At 369 to 376 (GATGGSLY) the chain is on the cytoplasmic side. Residues 377–397 (LDFLYSALVEFPAAFVILLII) form a helical membrane-spanning segment. The Extracellular portion of the chain corresponds to 398–402 (DRFGR). A helical transmembrane segment spans residues 403–423 (LYLLAGSNLLAGAACFFMIFI). Over 424-431 (SHDLHWLS) the chain is Cytoplasmic. Residues 432-452 (IVAACIGRMGITIVFQMVCLV) form a helical membrane-spanning segment. Residues 453–464 (SAELYPTFIRNL) are Extracellular-facing. Residues 465 to 485 (GVMVCSSLCDLGGVVAPFLVF) traverse the membrane as a helical segment. The Cytoplasmic portion of the chain corresponds to 486–492 (RLTEVWR). Residues 493 to 513 (GLPLVLFAALGLVAGGMSLLL) traverse the membrane as a helical segment. Residues 514–554 (PETKGVALPETIEEVERLGRKAKPRDNMIYLQVKMPEPAGL) are Extracellular-facing.

The protein belongs to the major facilitator (TC 2.A.1) superfamily. Organic cation transporter (TC 2.A.1.19) family. In terms of processing, phosphorylated.

It localises to the basolateral cell membrane. The protein localises to the apical cell membrane. It is found in the lateral cell membrane. Its subcellular location is the basal cell membrane. The protein resides in the cell membrane. It carries out the reaction 1-methylnicotinamide(out) = 1-methylnicotinamide(in). It catalyses the reaction dopamine(out) = dopamine(in). The enzyme catalyses serotonin(out) = serotonin(in). The catalysed reaction is (R)-adrenaline(out) = (R)-adrenaline(in). It carries out the reaction (R)-noradrenaline(out) = (R)-noradrenaline(in). It catalyses the reaction histamine(out) = histamine(in). The enzyme catalyses guanidine(out) = guanidine(in). The catalysed reaction is choline(out) = choline(in). It carries out the reaction acetylcholine(in) = acetylcholine(out). It catalyses the reaction thiamine(in) = thiamine(out). The enzyme catalyses spermidine(in) = spermidine(out). The catalysed reaction is agmatine(out) = agmatine(in). It carries out the reaction putrescine(out) = putrescine(in). It catalyses the reaction (R)-carnitine(in) = (R)-carnitine(out). The enzyme catalyses O-isobutanoyl-(R)-carnitine(in) = O-isobutanoyl-(R)-carnitine(out). The catalysed reaction is O-acetyl-(R)-carnitine(in) = O-acetyl-(R)-carnitine(out). It carries out the reaction O-3-hydroxybutanoyl-(R)-carnitine(in) = O-3-hydroxybutanoyl-(R)-carnitine(out). It catalyses the reaction O-propanoyl-(R)-carnitine(in) = O-propanoyl-(R)-carnitine(out). The enzyme catalyses O-butanoyl-(R)-carnitine(in) = O-butanoyl-(R)-carnitine(out). The catalysed reaction is O-2-methylbutanoyl-(R)-carnitine(in) = O-2-methylbutanoyl-(R)-carnitine(out). It carries out the reaction O-3-methylbutanoyl-(R)-carnitine(in) = O-3-methylbutanoyl-(R)-carnitine(out). It catalyses the reaction O-hexanoyl-(R)-carnitine(in) = O-hexanoyl-(R)-carnitine(out). The enzyme catalyses L-histidyl-L-proline diketopiperazine(in) = L-histidyl-L-proline diketopiperazine(out). The catalysed reaction is (R)-salsolinol(in) = (R)-salsolinol(out). It carries out the reaction prostaglandin F2alpha(out) = prostaglandin F2alpha(in). It catalyses the reaction prostaglandin E2(out) = prostaglandin E2(in). Its activity is regulated as follows. Phosphorylation of the transporter leads to changes in its substrate affinity, resulting in a regulation of the transport activity. In contrast with rat ortholog, ASP uptake is inhibited by protein kinase A (PKA) and C (PKC) activation. ASP uptake is also endogenously activated by calmodulin, the calmodulin-dependent kinase II and LCK tyrosine kinase. Inhibited by cGMP, most likely through a cGMP-binding protein that interacts with OCT1. Functionally, electrogenic voltage-dependent transporter that mediates the transport of a variety of organic cations such as endogenous bioactive amines, cationic drugs and xenobiotics. Functions as a pH- and Na(+)-independent, bidirectional transporter. Cation cellular uptake or release is driven by the electrochemical potential (i.e. membrane potential and concentration gradient) and substrate selectivity. Hydrophobicity is a major requirement for recognition in polyvalent substrates and inhibitors. Primarily expressed in the basolateral membrane of hepatocytes and proximal tubules and involved in the uptake and disposition of cationic compounds from the blood by hepatic and renal clearance. Most likely functions as an uptake carrier in enterocytes contributing to the intestinal elimination of organic cations from the systemic circulation. Transports endogenous monoamines such as N-1-methylnicotinamide (NMN), guanidine, neurotransmitters dopamine, serotonin, noradrenaline, adrenaline and histamine, and quaternary ammonium compound such as choline. Also transports natural polyamines such as spermidine, agmatine and putrescine at low affinity, but relatively high turnover. Involved in the hepatic and intestinal uptake of the vitamin B1/thiamine, hence regulating hepatic lipid and energy metabolism. Contributes to the influx and efflux of fatty acid carriers carnitines and acylcarnitines across the basolateral membrane of hepatocytes, from the liver to the systemic circulation and inversely and may be involved in regulating the systemic availability of hepatic acylcarnitines. Also capable of transporting non-amine endogenous compounds such as prostaglandin E2 (PGE2) and prostaglandin F2-alpha (PGF2-alpha). May contribute to the transport of cationic compounds in testes across the blood-testis-barrier. Also mediates the uptake of xenobiotics tributylmethylammonium (TBuMA), quinidine, N-methyl-quinine (NMQ), N-methyl-quinidine (NMQD) N-(4,4-azo-n-pentyl)-quinuclidine (APQ), azidoprocainamide methoiodide (AMP), N-(4,4-azo-n-pentyl)-21-deoxyajmalinium (APDA) and 4-(4-(dimethylamino)styryl)-N-methylpyridinium (ASP). This is Solute carrier family 22 member 1 (SLC22A1) from Sus scrofa (Pig).